The primary structure comprises 109 residues: Red pigment-concentrating prohormone (109 aa).

An N-terminal signal peptide occupies residues 1-25 (MVRRSGVTLLVVALLVVTLMSSVSA). A Pyrrolidone carboxylic acid modification is found at glutamine 26. At tryptophan 33 the chain carries Tryptophan amide. A disordered region spans residues 34–78 (GKRAAGASGSNGGVGEAVSGLHPSVGGAPGGVVPPGSSSPGDSCG). 2 stretches are compositionally biased toward low complexity: residues 49–59 (EAVSGLHPSVG) and 67–78 (PPGSSSPGDSCG).

This sequence belongs to the AKH/HRTH/RPCH family.

It localises to the secreted. Its function is as follows. This hormone adapts the animal to light backgrounds by stimulating concentration of the pigment of its red body-chromatophores. This chain is Red pigment-concentrating prohormone, found in Callinectes sapidus (Blue crab).